Consider the following 307-residue polypeptide: Ribonuclease Z (307 aa).

Residues histidine 61, histidine 63, aspartate 65, histidine 66, histidine 138, aspartate 208, and histidine 264 each contribute to the Zn(2+) site. Aspartate 65 functions as the Proton acceptor in the catalytic mechanism.

The protein belongs to the RNase Z family. In terms of assembly, homodimer. It depends on Zn(2+) as a cofactor.

The catalysed reaction is Endonucleolytic cleavage of RNA, removing extra 3' nucleotides from tRNA precursor, generating 3' termini of tRNAs. A 3'-hydroxy group is left at the tRNA terminus and a 5'-phosphoryl group is left at the trailer molecule.. Functionally, zinc phosphodiesterase, which displays some tRNA 3'-processing endonuclease activity. Probably involved in tRNA maturation, by removing a 3'-trailer from precursor tRNA. The chain is Ribonuclease Z from Pyrococcus abyssi (strain GE5 / Orsay).